Reading from the N-terminus, the 426-residue chain is Serine--tRNA ligase (426 aa).

Residue 231–233 (TAE) participates in L-serine binding. 262-264 (RAE) provides a ligand contact to ATP. Glu-285 is an L-serine binding site. ATP is bound at residue 349-352 (EISS). Ser-385 is an L-serine binding site.

This sequence belongs to the class-II aminoacyl-tRNA synthetase family. Type-1 seryl-tRNA synthetase subfamily. As to quaternary structure, homodimer. The tRNA molecule binds across the dimer.

The protein localises to the cytoplasm. It catalyses the reaction tRNA(Ser) + L-serine + ATP = L-seryl-tRNA(Ser) + AMP + diphosphate + H(+). The enzyme catalyses tRNA(Sec) + L-serine + ATP = L-seryl-tRNA(Sec) + AMP + diphosphate + H(+). It participates in aminoacyl-tRNA biosynthesis; selenocysteinyl-tRNA(Sec) biosynthesis; L-seryl-tRNA(Sec) from L-serine and tRNA(Sec): step 1/1. Its function is as follows. Catalyzes the attachment of serine to tRNA(Ser). Is also able to aminoacylate tRNA(Sec) with serine, to form the misacylated tRNA L-seryl-tRNA(Sec), which will be further converted into selenocysteinyl-tRNA(Sec). The polypeptide is Serine--tRNA ligase (Myxococcus xanthus (strain DK1622)).